The following is an 868-amino-acid chain: Leucine-rich repeat receptor-like serine/threonine-protein kinase At2g14510 (868 aa).

A signal peptide spans 1-23 (METRNKFMLLACATFSIMSLVKS). Residues 24–510 (QNQQGFISLD…KHQPKSWLVA (487 aa)) lie on the Extracellular side of the membrane. N-linked (GlcNAc...) asparagine glycans are attached at residues Asn-48, Asn-68, Asn-231, Asn-235, Asn-258, Asn-291, Asn-433, and Asn-446. 3 LRR repeats span residues 412–435 (RIIS…QNLT), 436–458 (MLRE…LATI), and 460–482 (PLLV…LQDR). N-linked (GlcNAc...) asparagine glycosylation is present at Asn-495. A helical transmembrane segment spans residues 511–531 (IVASISCVAVTIIVLVLIFIF). The Cytoplasmic segment spans residues 532–868 (RRRKSSTRKV…TFISDIPSAR (337 aa)). The region spanning 563-832 (NNFEVVLGKG…NMTRVAHELN (270 aa)) is the Protein kinase domain. ATP-binding positions include 569–577 (LGKGGFGVV) and Lys-590. Tyr-635 is subject to Phosphotyrosine. The active-site Proton acceptor is the Asp-687. Ser-721 carries the post-translational modification Phosphoserine. Phosphothreonine occurs at positions 722 and 727. Phosphotyrosine is present on Tyr-735.

The protein belongs to the protein kinase superfamily. Ser/Thr protein kinase family.

The protein localises to the cell membrane. The enzyme catalyses L-seryl-[protein] + ATP = O-phospho-L-seryl-[protein] + ADP + H(+). The catalysed reaction is L-threonyl-[protein] + ATP = O-phospho-L-threonyl-[protein] + ADP + H(+). This Arabidopsis thaliana (Mouse-ear cress) protein is Leucine-rich repeat receptor-like serine/threonine-protein kinase At2g14510.